The following is a 224-amino-acid chain: UPF0758 protein mma_2551 (224 aa).

The region spanning 102–224 (SLNSPQAVKK…VYSFAEHGHL (123 aa)) is the MPN domain. The Zn(2+) site is built by histidine 173, histidine 175, and aspartate 186. Positions 173 to 186 (HNHPSGSSEPSAAD) match the JAMM motif motif.

This sequence belongs to the UPF0758 family.

This is UPF0758 protein mma_2551 from Janthinobacterium sp. (strain Marseille) (Minibacterium massiliensis).